The primary structure comprises 179 residues: Large ribosomal subunit protein uL5 (179 aa).

Belongs to the universal ribosomal protein uL5 family. Part of the 50S ribosomal subunit; part of the 5S rRNA/L5/L18/L25 subcomplex. Contacts the 5S rRNA and the P site tRNA. Forms a bridge to the 30S subunit in the 70S ribosome.

In terms of biological role, this is one of the proteins that bind and probably mediate the attachment of the 5S RNA into the large ribosomal subunit, where it forms part of the central protuberance. In the 70S ribosome it contacts protein S13 of the 30S subunit (bridge B1b), connecting the 2 subunits; this bridge is implicated in subunit movement. Contacts the P site tRNA; the 5S rRNA and some of its associated proteins might help stabilize positioning of ribosome-bound tRNAs. The sequence is that of Large ribosomal subunit protein uL5 from Shewanella sp. (strain ANA-3).